The primary structure comprises 22 residues: Mu-conotoxin KIIIB (22 aa).

A propeptide spanning residues 1–2 (KR) is cleaved from the precursor. Disulfide bonds link Cys5/Cys13, Cys5/Cys19, Cys5/Cys20, Cys6/Cys13, Cys6/Cys19, Cys8/Cys19, and Cys8/Cys20. Pharmacophore key residues stretches follow at residues 14-16 (RDH) and 18-19 (RC). Position 20 is a cysteine amide (Cys20).

Belongs to the conotoxin M superfamily. As to quaternary structure, monomer. Post-translationally, toxins with three different disulfide connectivities have been synthesized. The conotoxin mu-KIIIA-P1 shows the connectivity C1-C5, C2-C4, and C3-C6, whereas mu-KIIIA-P2 shows the connectivity C1-C6, C2-C4, and C3-C5. The conotoxin mu-KIIIA-N has the 'native' fold of the mu-conotoxin family (C1-C4, C2-C5, and C3-C6). Mu-KIIIA-P1 and mu-KIIIA-P2 are obtained by both thermodynamic oxidative folding and regioselective synthesis. Mu-KIIIA-P1 is the major oxidative folding product. Mu-KIIIA-N is only obtained by regioselective synthesis. In terms of tissue distribution, expressed by the venom duct.

It localises to the secreted. In terms of biological role, mu-conotoxin KIIIA-P1: mu-conotoxins block voltage-gated sodium channels (Nav). This toxin potently blocks Nav1.2/SCN2A (IC(50)5-124 nM), Nav1.4/SCN4A (IC(50)=20-90 nM), and Nav1.7/SCN9A (IC(50)=290-413 nM). It moderately blocks Nav1.1/SCN1A, and mNav1.6/SCN8A. It also shows a very low activity on Nav1.3/SCN3A. This toxin binds a microsite within the pore different from the tetrodotoxin binding site 1 (tested on Nav1.2). The block is partial, with a residual current that can be completely blocked by TTX. The toxin probably docks at a more superficial site in the outer vestibule of the channel than does TTX. On rNav1.2/SCN2A, it produces a block that is only partially reversible. The block of Nav1.7 is modified when beta-subunits are coexpressed with the alpha subunit. Hence, blocks of channels containing beta-1 and beta-3 subunits are more potent (compared to channels without beta subunits), whereas blocks of channels containing beta-2 and beta-4 subunits are less potent (compared to channels without beta subunits). Mu-conotoxin KIIIA-P2: This toxin potently blocks Nav1.2/SCN2A (Kd=230 nM, IC(50)=1.37 uM) and Nav1.4/SCN4A (Kd=830 nM, IC(50)=2 uM). It also moderately blocks Nav1.7/SCN9A (Kd=1.57 uM, IC(50)=5.4 uM). In addition, this toxin may also inhibit other sodium channels, as does Mu-conotoxin KIIIA-P1. Its function is as follows. Mu-conotoxin KIIIA-N: This toxin moderately blocks Nav1.2/SCN2A (IC(50)=875 nM), Nav1.4/SCN4A (IC(50)=472 nM), and Nav1.7/SCN9A (IC(50)=887 nM). Functionally, mu-conotoxin KIIIB-P1: This toxin potently blocks Nav1.2/SCN2A (Kd=470 nM). In addition, this toxin may also inhibit other sodium channels, as does Mu-conotoxin KIIIA-P1. In terms of biological role, mu-conotoxin KIIIB-P2: This toxin potently blocks Nav1.2/SCN2A (Kd=26 nM). In addition, this toxin may also inhibit other sodium channels, as does Mu-conotoxin KIIIA-P1. The polypeptide is Mu-conotoxin KIIIB (Conus kinoshitai (Kinoshita's cone)).